The primary structure comprises 252 residues: Ubiquitin carboxyl-terminal hydrolase isozyme L1 (252 aa).

An N-acetylmethionine modification is found at M1. The 249-residue stretch at 2–250 (QLKPMEINPE…VRFSAVALCK (249 aa)) folds into the UCH catalytic domain. Residues 5–10 (PMEINP) are interaction with ubiquitin. Residue C119 is the Nucleophile of the active site. S154 is modified (phosphoserine). H190 (proton donor) is an active-site residue. The interval 240-245 (EVRFSA) is interaction with ubiquitin. A lipid anchor (S-farnesyl cysteine) is attached at C249. The propeptide at 250-252 (KAA) is removed in mature form.

It belongs to the peptidase C12 family. Monomer. Homodimer. Interacts with COPS5 and SNCA. O-glycosylated. Neurons and cells of the diffuse neuroendocrine system and their tumors.

It is found in the cytoplasm. It localises to the endoplasmic reticulum membrane. The enzyme catalyses Thiol-dependent hydrolysis of ester, thioester, amide, peptide and isopeptide bonds formed by the C-terminal Gly of ubiquitin (a 76-residue protein attached to proteins as an intracellular targeting signal).. Ubiquitin-protein hydrolase involved both in the processing of ubiquitin precursors and of ubiquitinated proteins. This enzyme is a thiol protease that recognizes and hydrolyzes a peptide bond at the C-terminal glycine of ubiquitin. Also binds to free monoubiquitin and may prevent its degradation in lysosomes. The homodimer may have ATP-independent ubiquitin ligase activity. The sequence is that of Ubiquitin carboxyl-terminal hydrolase isozyme L1 (UCHL1) from Bos taurus (Bovine).